An 89-amino-acid chain; its full sequence is Cell division topological specificity factor (89 aa).

Belongs to the MinE family.

Prevents the cell division inhibition by proteins MinC and MinD at internal division sites while permitting inhibition at polar sites. This ensures cell division at the proper site by restricting the formation of a division septum at the midpoint of the long axis of the cell. In Klebsiella pneumoniae subsp. pneumoniae (strain ATCC 700721 / MGH 78578), this protein is Cell division topological specificity factor.